We begin with the raw amino-acid sequence, 196 residues long: Probable thymidylate kinase (196 aa).

8 to 15 (GIDASGKT) serves as a coordination point for ATP.

It belongs to the thymidylate kinase family.

The enzyme catalyses dTMP + ATP = dTDP + ADP. The sequence is that of Probable thymidylate kinase from Metallosphaera sedula (strain ATCC 51363 / DSM 5348 / JCM 9185 / NBRC 15509 / TH2).